The chain runs to 59 residues: Large ribosomal subunit protein uL30 (59 aa).

Belongs to the universal ribosomal protein uL30 family. As to quaternary structure, part of the 50S ribosomal subunit.

In Edwardsiella ictaluri (strain 93-146), this protein is Large ribosomal subunit protein uL30.